The primary structure comprises 330 residues: Fructose-1,6-bisphosphatase class 1 (330 aa).

Positions 84, 103, 105, and 106 each coordinate Mg(2+). Substrate contacts are provided by residues aspartate 106–serine 109, asparagine 196, and lysine 262. Glutamate 268 lines the Mg(2+) pocket.

This sequence belongs to the FBPase class 1 family. In terms of assembly, homotetramer. Mg(2+) serves as cofactor.

It localises to the cytoplasm. It carries out the reaction beta-D-fructose 1,6-bisphosphate + H2O = beta-D-fructose 6-phosphate + phosphate. The protein operates within carbohydrate biosynthesis; gluconeogenesis. In Shewanella sp. (strain ANA-3), this protein is Fructose-1,6-bisphosphatase class 1.